The chain runs to 276 residues: Vitamin B12-binding protein (276 aa).

Positions 1–20 (MLVIRLIACTFLFITPSLLA) are cleaved as a signal peptide. Residues 27–274 (RIISLAPHAT…QVCTYLKIAQ (248 aa)) form the Fe/B12 periplasmic-binding domain. Tyr54 contacts cyanocob(III)alamin. A disulfide bond links Cys187 and Cys267.

The protein belongs to the BtuF family. The complex is composed of two ATP-binding proteins (BtuD), two transmembrane proteins (BtuC) and a solute-binding protein (BtuF).

It is found in the periplasm. Functionally, part of the ABC transporter complex BtuCDF involved in vitamin B12 import. Binds vitamin B12 and delivers it to the periplasmic surface of BtuC. The protein is Vitamin B12-binding protein of Vibrio cholerae serotype O1 (strain ATCC 39541 / Classical Ogawa 395 / O395).